We begin with the raw amino-acid sequence, 114 residues long: BolA-like protein DDB_G0274169 (114 aa).

The segment covering 88 to 98 (TQWKKNNQTKI) has biased composition (polar residues). The tract at residues 88–114 (TQWKKNNQTKINVDDDKSPSCKGGFGK) is disordered.

Belongs to the BolA/IbaG family.

The sequence is that of BolA-like protein DDB_G0274169 from Dictyostelium discoideum (Social amoeba).